Consider the following 318-residue polypeptide: MSSPLKVIFAGTPDFAASALQALLDANYQIVAVYTQPDRPAGRGNKLLPGPVKQLALKHTIPVEQPLNFKNEEDRQQLRDYEADVMVVAAYGIILPQAVLDAPKRGCLNIHASLLPRWRGAAPIQRAIIAGDQESGITIMQMEAGLDTGPMLLKTVTPISADDTGRTLHDRLAQMGGEAIVKALALLQEDKLQAERQQDDLATYAHKLQKEEARIDWSEPASLIQRKIAAFNPWPVCFTEDNGQTIRIWAASASADMSKAKPGTILERSAEAVKVACGEGVLSITSLQLPGGKPISCKDLINGGKPLMQLGQVLEITS.

113 to 116 is a binding site for (6S)-5,6,7,8-tetrahydrofolate; it reads SLLP.

Belongs to the Fmt family.

It carries out the reaction L-methionyl-tRNA(fMet) + (6R)-10-formyltetrahydrofolate = N-formyl-L-methionyl-tRNA(fMet) + (6S)-5,6,7,8-tetrahydrofolate + H(+). Attaches a formyl group to the free amino group of methionyl-tRNA(fMet). The formyl group appears to play a dual role in the initiator identity of N-formylmethionyl-tRNA by promoting its recognition by IF2 and preventing the misappropriation of this tRNA by the elongation apparatus. In Hahella chejuensis (strain KCTC 2396), this protein is Methionyl-tRNA formyltransferase.